The chain runs to 67 residues: DNA-directed RNA polymerase subunit omega (67 aa).

The protein belongs to the RNA polymerase subunit omega family. The RNAP catalytic core consists of 2 alpha, 1 beta, 1 beta' and 1 omega subunit. When a sigma factor is associated with the core the holoenzyme is formed, which can initiate transcription.

It catalyses the reaction RNA(n) + a ribonucleoside 5'-triphosphate = RNA(n+1) + diphosphate. In terms of biological role, promotes RNA polymerase assembly. Latches the N- and C-terminal regions of the beta' subunit thereby facilitating its interaction with the beta and alpha subunits. The protein is DNA-directed RNA polymerase subunit omega of Moorella thermoacetica (strain ATCC 39073 / JCM 9320).